Reading from the N-terminus, the 404-residue chain is Arginine biosynthesis bifunctional protein ArgJ (404 aa).

The substrate site is built by Thr-166, Lys-189, Thr-200, Glu-280, Asn-399, and Ser-404. Thr-200 serves as the catalytic Nucleophile.

The protein belongs to the ArgJ family. Heterotetramer of two alpha and two beta chains.

It localises to the cytoplasm. It catalyses the reaction N(2)-acetyl-L-ornithine + L-glutamate = N-acetyl-L-glutamate + L-ornithine. The catalysed reaction is L-glutamate + acetyl-CoA = N-acetyl-L-glutamate + CoA + H(+). The protein operates within amino-acid biosynthesis; L-arginine biosynthesis; L-ornithine and N-acetyl-L-glutamate from L-glutamate and N(2)-acetyl-L-ornithine (cyclic): step 1/1. Its pathway is amino-acid biosynthesis; L-arginine biosynthesis; N(2)-acetyl-L-ornithine from L-glutamate: step 1/4. Functionally, catalyzes two activities which are involved in the cyclic version of arginine biosynthesis: the synthesis of N-acetylglutamate from glutamate and acetyl-CoA as the acetyl donor, and of ornithine by transacetylation between N(2)-acetylornithine and glutamate. This is Arginine biosynthesis bifunctional protein ArgJ from Mycobacterium bovis (strain ATCC BAA-935 / AF2122/97).